A 125-amino-acid chain; its full sequence is Prefoldin subunit beta (125 aa).

Belongs to the prefoldin subunit beta family. In terms of assembly, heterohexamer of two alpha and four beta subunits.

The protein localises to the cytoplasm. Its function is as follows. Molecular chaperone capable of stabilizing a range of proteins. Seems to fulfill an ATP-independent, HSP70-like function in archaeal de novo protein folding. In Sulfurisphaera tokodaii (strain DSM 16993 / JCM 10545 / NBRC 100140 / 7) (Sulfolobus tokodaii), this protein is Prefoldin subunit beta (pfdB).